We begin with the raw amino-acid sequence, 609 residues long: UvrABC system protein C (609 aa).

Residues 13-91 form the GIY-YIG domain; the sequence is HQPGVYRMFD…IKAFQPRYNV (79 aa). A UVR domain is found at 201-236; that stretch reads QQVLEHLIKKMEQASMQLNFEQAAYFRDQIQAIRAV.

It belongs to the UvrC family. Interacts with UvrB in an incision complex.

The protein resides in the cytoplasm. Its function is as follows. The UvrABC repair system catalyzes the recognition and processing of DNA lesions. UvrC both incises the 5' and 3' sides of the lesion. The N-terminal half is responsible for the 3' incision and the C-terminal half is responsible for the 5' incision. The protein is UvrABC system protein C of Histophilus somni (strain 2336) (Haemophilus somnus).